Here is a 352-residue protein sequence, read N- to C-terminus: Isoflavone-7-O-methyltransferase 6 (352 aa).

Substrate is bound at residue V118–Y127. Residues G196, D219, D239, M240, and K253 each contribute to the S-adenosyl-L-methionine site. The active-site Proton acceptor is the H257.

This sequence belongs to the class I-like SAM-binding methyltransferase superfamily. Cation-independent O-methyltransferase family. COMT subfamily. Homodimer.

It catalyses the reaction a 7-hydroxyisoflavone + S-adenosyl-L-methionine = a 7-methoxyisoflavone + S-adenosyl-L-homocysteine + H(+). It participates in phytoalexin biosynthesis; medicarpin biosynthesis. Transfers a methyl group to 7-hydroxyls of the isoflavones daidzein, genistein and 6,7,4'-trihydroxyisoflavone. Can also methylate (+)6a-hydroxymaackiain with lower efficiency. This chain is Isoflavone-7-O-methyltransferase 6, found in Medicago sativa (Alfalfa).